The chain runs to 523 residues: Putative glycerol-3-phosphate transporter 1 (523 aa).

12 helical membrane-spanning segments follow: residues 29–49 (LSYS…YASY), 102–122 (VLLG…MYFA), 133–153 (IFLT…GVGY), 163–183 (FLIM…SVVA), 196–216 (LIMG…SLIA), 228–248 (FVVP…FLPV), 306–326 (FALC…WLPF), 344–364 (GNLS…AGYI), 368–388 (IGAR…ALFF), 402–422 (SLMF…TTAV), 444–464 (AIID…TGYI), and 468–488 (GSWT…GLLL).

It belongs to the major facilitator superfamily. Organophosphate:Pi antiporter (OPA) (TC 2.A.1.4) family.

The protein resides in the membrane. The protein is Putative glycerol-3-phosphate transporter 1 of Arabidopsis thaliana (Mouse-ear cress).